The following is a 320-amino-acid chain: Ferrochelatase (320 aa).

Residues histidine 194 and glutamate 275 each coordinate Fe cation.

It belongs to the ferrochelatase family.

It localises to the cytoplasm. It carries out the reaction heme b + 2 H(+) = protoporphyrin IX + Fe(2+). The protein operates within porphyrin-containing compound metabolism; protoheme biosynthesis; protoheme from protoporphyrin-IX: step 1/1. Functionally, catalyzes the ferrous insertion into protoporphyrin IX. In Stenotrophomonas maltophilia (strain R551-3), this protein is Ferrochelatase.